Here is a 295-residue protein sequence, read N- to C-terminus: Tyrosine transport system permease protein (295 aa).

Helical transmembrane passes span 3–23, 57–77, 81–101, 122–142, 173–193, 200–220, 232–252, and 256–276; these read GIIS…GVYI, VVAT…TGIL, FKIS…SINL, ISPI…LDLF, ILGL…MAQF, NMGI…ITLF, IIVG…LGML, and LKLI…LNIS.

This sequence belongs to the binding-protein-dependent transport system permease family. As to quaternary structure, the complex is probably composed of two ATP-binding proteins (CDR20291_0806), two transmembrane proteins (CDR20291_0807) and a solute-binding protein (CDR20291_0805).

The protein resides in the cell membrane. Functionally, probably part of an ABC transporter complex involved in tyrosine uptake. May also import phenylalanine. Probably responsible for the translocation of the substrate across the membrane. The chain is Tyrosine transport system permease protein from Clostridioides difficile (strain R20291) (Peptoclostridium difficile).